Consider the following 187-residue polypeptide: Elongation factor P (187 aa).

Belongs to the elongation factor P family.

It localises to the cytoplasm. The protein operates within protein biosynthesis; polypeptide chain elongation. Involved in peptide bond synthesis. Stimulates efficient translation and peptide-bond synthesis on native or reconstituted 70S ribosomes in vitro. Probably functions indirectly by altering the affinity of the ribosome for aminoacyl-tRNA, thus increasing their reactivity as acceptors for peptidyl transferase. This chain is Elongation factor P, found in Mycobacterium avium (strain 104).